The sequence spans 305 residues: Glycine--tRNA ligase alpha subunit (305 aa).

This sequence belongs to the class-II aminoacyl-tRNA synthetase family. Tetramer of two alpha and two beta subunits.

The protein resides in the cytoplasm. It carries out the reaction tRNA(Gly) + glycine + ATP = glycyl-tRNA(Gly) + AMP + diphosphate. This Streptococcus pyogenes serotype M49 (strain NZ131) protein is Glycine--tRNA ligase alpha subunit.